Consider the following 240-residue polypeptide: Probable transcriptional regulatory protein OEOE_0768 (240 aa).

Residues 1–21 form a disordered region; it reads MSGHSKWHNIQGRKNAQDAKR.

Belongs to the TACO1 family.

The protein localises to the cytoplasm. This is Probable transcriptional regulatory protein OEOE_0768 from Oenococcus oeni (strain ATCC BAA-331 / PSU-1).